The following is a 494-amino-acid chain: Neuronal acetylcholine receptor subunit alpha-6 (494 aa).

The first 25 residues, 1 to 25 (MLTSKGQGFLHGGLCLWLCVFTPFF), serve as a signal peptide directing secretion. Residues 26 to 239 (KGCVGCATEE…ITYSFYIRRL (214 aa)) are Extracellular-facing. N-linked (GlcNAc...) asparagine glycosylation is found at asparagine 54 and asparagine 171. 2 disulfide bridges follow: cysteine 158–cysteine 172 and cysteine 222–cysteine 223. 3 helical membrane passes run 240–264 (PMFYTINLIIPCLFISFLTVLVFYL), 272–290 (VTLCISVLLSLTVFLLVIT), and 306–327 (YLLFTMIFVTLSIVVTVFVLNI). Residues 328-465 (HYRTPTTHTM…WKYVAMVVDR (138 aa)) are Cytoplasmic-facing. Serine 401 carries the phosphoserine modification. Residues 466–484 (VFLWVFIIVCVFGTAGLFL) traverse the membrane as a helical segment.

This sequence belongs to the ligand-gated ion channel (TC 1.A.9) family. Acetylcholine receptor (TC 1.A.9.1) subfamily. Alpha-6/CHRNA6 sub-subfamily. As to quaternary structure, neuronal AChR is composed of two different types of subunits: alpha and non-alpha (beta). CHRNA6/alpha-6 subunit can be combined to CHRNB2/beta-2, CHRNA4/alpha-4 and CHRNB3/beta-3 to give rise to functional receptors. Heteropentamers containing CHRNB3 have an stoichiometry of (CHRNA6:CHRNB2)2:CHRNB3. Interacts with LYPD6.

It is found in the synaptic cell membrane. It carries out the reaction Ca(2+)(in) = Ca(2+)(out). It catalyses the reaction K(+)(in) = K(+)(out). The enzyme catalyses Na(+)(in) = Na(+)(out). Its activity is regulated as follows. Activated by a myriad of ligands such as acetylcholine, cytisine and nicotine. CHRNA6 nAChR activity is inhibited by the antagonists alpha-conotoxin MII and PIA, a small disulfide-constrained peptides from cone snails. In terms of biological role, component of neuronal acetylcholine receptors (nAChRs) that function as pentameric, ligand-gated cation channels with high calcium permeability among other activities. nAChRs are excitatory neurotrasnmitter receptors formed by a collection of nAChR subunits known to mediate synaptic transmission in the nervous system and the neuromuscular junction. Each nAchR subunit confers differential attributes to channel properties, including activation, deactivation and desensitization kinetics, pH sensitivity, cation permeability, and binding to allosteric modulators. CHRNA6 forms pentameric channels with CHRNB2, CHRNB3 and CHRNA4 that exhibit high sensitivity to ACh and nicotine and are predominantly expressed in only a few brain areas, including dopaminergic neurons, norepirephrine neurons and cells of the visual system. nAChrs containing CHRNA6 subunits mediate endogenous cholinergic modulation of dopamine and gamma-aminobutyric acid (GABA) release in response to nicotine at nerve terminals. This is Neuronal acetylcholine receptor subunit alpha-6 (CHRNA6) from Pan troglodytes (Chimpanzee).